Consider the following 248-residue polypeptide: MSGNIAFGRFDDSFSAASLKAYVAEFISTLVFVFAGVGSAIAYTKLTGGAPLDPAGLVAVAVCHGFGLFVAVAIGANISGGHVNPAVTFGLALGGQITILTGVFYWIAQLLGAIVGAVLVQFCTGVATPTHGLSGVGAFEGVVMEIIVTFGLVYTVYATAADPKKGSLGTIAPIAIGFIVGANILVAGPFSGGSMNPARSFGPAVASGDYTNIWIYWVGPLVGGGLAGLVYRYVYMCGDHAPVASSEF.

Transmembrane regions (helical) follow at residues 21–41 and 55–75; these read AYVAEFISTLVFVFAGVGSAI and AGLVAVAVCHGFGLFVAVAIG. The short motif at 84–86 is the NPA 1 element; it reads NPA. The next 3 membrane-spanning stretches (helical) occupy residues 87-109, 133-153, and 168-188; these read VTFGLALGGQITILTGVFYWIAQ, LSGVGAFEGVVMEIIVTFGLV, and LGTIAPIAIGFIVGANILVAG. An NPA 2 motif is present at residues 196–198; it reads NPA. The helical transmembrane segment at 210–230 threads the bilayer; that stretch reads YTNIWIYWVGPLVGGGLAGLV.

Belongs to the MIP/aquaporin (TC 1.A.8) family. TIP (TC 1.A.8.10) subfamily. Expressed in roots and leaves.

The protein localises to the vacuole membrane. Its function is as follows. Aquaporins facilitate the transport of water and small neutral solutes across cell membranes. May be involved in transport from the vacuolar compartment to the cytoplasm. This chain is Probable aquaporin TIP2-2 (TIP2-2), found in Oryza sativa subsp. japonica (Rice).